A 237-amino-acid polypeptide reads, in one-letter code: Uridylate kinase (237 aa).

12–15 (KISG) provides a ligand contact to ATP. Glycine 54 lines the UMP pocket. Glycine 55 and arginine 59 together coordinate ATP. UMP is bound by residues aspartate 72 and 133–140 (TGNPFFST). Positions 166 and 169 each coordinate ATP.

This sequence belongs to the UMP kinase family. Homohexamer.

It localises to the cytoplasm. The catalysed reaction is UMP + ATP = UDP + ADP. It participates in pyrimidine metabolism; CTP biosynthesis via de novo pathway; UDP from UMP (UMPK route): step 1/1. Inhibited by UTP. Catalyzes the reversible phosphorylation of UMP to UDP. This is Uridylate kinase from Caldanaerobacter subterraneus subsp. tengcongensis (strain DSM 15242 / JCM 11007 / NBRC 100824 / MB4) (Thermoanaerobacter tengcongensis).